The primary structure comprises 134 residues: Lymphocyte antigen 6G (134 aa).

The first 26 residues, 1-26, serve as a signal peptide directing secretion; that stretch reads MDTCHIAKSCVLILLVVLLCAERAQG. The region spanning 27–118 is the UPAR/Ly6 domain; that stretch reads LECYNCIGVP…PTGGSSWTMA (92 aa). Cystine bridges form between C29–C53, C32–C41, C46–C74, C78–C98, and C99–C104. Residue N105 is the site of GPI-anchor amidated asparagine attachment. Positions 106–134 are cleaved as a propeptide — removed in mature form; that stretch reads AAVPTGGSSWTMAGVLLFSLVSVLLQTFL.

In terms of tissue distribution, expressed in bone marrow.

Its subcellular location is the cell membrane. The sequence is that of Lymphocyte antigen 6G (Ly6g) from Mus musculus (Mouse).